Here is a 407-residue protein sequence, read N- to C-terminus: Phospholipid-transporting ATPase accessory subunit CDC50 (407 aa).

The interval 1–33 (MAPRRRRGAGQDGSDDGRSDSDAPKNRPPNTAF) is disordered. Topologically, residues 1-48 (MAPRRRRGAGQDGSDDGRSDSDAPKNRPPNTAFRQQRMRAWQCVLTPK) are cytoplasmic. Over residues 15-25 (DDGRSDSDAPK) the composition is skewed to basic and acidic residues. Residues 49–69 (LIVTVFSILAAIYLGFGAWLT) form a helical membrane-spanning segment. Residues 70-359 (YLAHTVRDLK…TMGSRNIWPG (290 aa)) are Extracellular-facing. The cysteines at positions 85 and 139 are disulfide-linked. Asparagine 131 and asparagine 189 each carry an N-linked (GlcNAc...) asparagine glycan. A disulfide bond links cysteine 193 and cysteine 210. N-linked (GlcNAc...) asparagine glycans are attached at residues asparagine 219, asparagine 232, asparagine 241, and asparagine 314. A helical transmembrane segment spans residues 360–380 (IIFLIVGGICLVLDIYFILSF). At 381-407 (FIWRPRKLGDPSYLSWNQPSAPGGHSS) the chain is on the cytoplasmic side.

This sequence belongs to the CDC50/LEM3 family. As to quaternary structure, component of a flippase complex consisting of DNF1 and CDC50. Interacts with DNF1; the interaction is direct.

It localises to the cell membrane. In terms of biological role, accessory component of a P4-ATPase flippase complex which catalyzes the hydrolysis of ATP coupled to the transport of phosphatidylcholine and phosphatidylserine from the lumen to the cytosolic leaflet of membranes and ensures the maintenance of asymmetric distribution of phospholipids. This is Phospholipid-transporting ATPase accessory subunit CDC50 from Chaetomium thermophilum (strain DSM 1495 / CBS 144.50 / IMI 039719) (Thermochaetoides thermophila).